A 301-amino-acid polypeptide reads, in one-letter code: Probable alpha-L-glutamate ligase (301 aa).

The ATP-grasp domain maps to leucine 104–glutamate 287. ATP is bound by residues lysine 141, glutamate 178–phenylalanine 179, aspartate 187, and arginine 211–asparagine 213. 3 residues coordinate Mg(2+): aspartate 248, glutamate 260, and asparagine 262. Residues aspartate 248, glutamate 260, and asparagine 262 each contribute to the Mn(2+) site.

It belongs to the RimK family. It depends on Mg(2+) as a cofactor. Mn(2+) is required as a cofactor.

This chain is Probable alpha-L-glutamate ligase, found in Maridesulfovibrio salexigens (strain ATCC 14822 / DSM 2638 / NCIMB 8403 / VKM B-1763) (Desulfovibrio salexigens).